A 146-amino-acid polypeptide reads, in one-letter code: Hemoglobin subunit beta-2 (146 aa).

The Globin domain occupies 2 to 146 (HWTAEEKQLV…VAHALAYHYH (145 aa)). Residues histidine 63 and histidine 92 each coordinate heme b.

It belongs to the globin family. There are three forms of hemoglobin in Sphenodon: A, A' and D. Hb A is a tetramer of two alpha-A and two beta-1, Hb A' is a tetramer of two alpha-a and two beta-2, Hb D is a tetramer of two alpha-D and two beta-2.

Functionally, involved in oxygen transport from the lung to the various peripheral tissues. The protein is Hemoglobin subunit beta-2 (HBB2) of Sphenodon punctatus (Tuatara).